The sequence spans 337 residues: Anthranilate phosphoribosyltransferase (337 aa).

5-phospho-alpha-D-ribose 1-diphosphate contacts are provided by residues Gly80, 83-84, Thr88, 90-93, 108-116, and Ser120; these read GD, NIST, and KHGNRAVSS. Gly80 is an anthranilate binding site. Ser92 contributes to the Mg(2+) binding site. Asn111 provides a ligand contact to anthranilate. Arg166 is a binding site for anthranilate. Mg(2+) is bound by residues Asp224 and Glu225.

The protein belongs to the anthranilate phosphoribosyltransferase family. As to quaternary structure, homodimer. Mg(2+) serves as cofactor.

The catalysed reaction is N-(5-phospho-beta-D-ribosyl)anthranilate + diphosphate = 5-phospho-alpha-D-ribose 1-diphosphate + anthranilate. It functions in the pathway amino-acid biosynthesis; L-tryptophan biosynthesis; L-tryptophan from chorismate: step 2/5. Its function is as follows. Catalyzes the transfer of the phosphoribosyl group of 5-phosphorylribose-1-pyrophosphate (PRPP) to anthranilate to yield N-(5'-phosphoribosyl)-anthranilate (PRA). The polypeptide is Anthranilate phosphoribosyltransferase (Anaeromyxobacter dehalogenans (strain 2CP-1 / ATCC BAA-258)).